The primary structure comprises 357 residues: Quinolinate synthase (357 aa).

Positions 50 and 71 each coordinate iminosuccinate. Cys-116 contacts [4Fe-4S] cluster. Residues 142–144 (YAN) and Ser-159 contribute to the iminosuccinate site. Cys-203 is a [4Fe-4S] cluster binding site. Iminosuccinate contacts are provided by residues 229–231 (HPE) and Thr-246. Cys-300 contributes to the [4Fe-4S] cluster binding site.

The protein belongs to the quinolinate synthase family. Type 1 subfamily. The cofactor is [4Fe-4S] cluster.

It is found in the cytoplasm. It catalyses the reaction iminosuccinate + dihydroxyacetone phosphate = quinolinate + phosphate + 2 H2O + H(+). It participates in cofactor biosynthesis; NAD(+) biosynthesis; quinolinate from iminoaspartate: step 1/1. Functionally, catalyzes the condensation of iminoaspartate with dihydroxyacetone phosphate to form quinolinate. This chain is Quinolinate synthase, found in Shewanella oneidensis (strain ATCC 700550 / JCM 31522 / CIP 106686 / LMG 19005 / NCIMB 14063 / MR-1).